We begin with the raw amino-acid sequence, 76 residues long: Frizzled-3 (76 aa).

The Cytoplasmic portion of the chain corresponds to 1–5; sequence YPERP. Residues 6-26 traverse the membrane as a helical segment; that stretch reads IIFYAVCYMMVSLIFFIGFLL. The Extracellular segment spans residues 27–54; sequence EDRVACNASSPAQYKASTVTQGSHNKAC. Asn-33 carries an N-linked (GlcNAc...) asparagine glycan. Residues 55 to 75 form a helical membrane-spanning segment; sequence TMLFMVLYFFTMAGSVWWVIL. Residue Arg-76 is a topological domain, cytoplasmic.

Belongs to the G-protein coupled receptor Fz/Smo family.

It is found in the membrane. Its subcellular location is the cell membrane. It localises to the cell surface. The protein localises to the apical cell membrane. In terms of biological role, receptor for Wnt proteins. Most of frizzled receptors are coupled to the beta-catenin canonical signaling pathway, which leads to the activation of disheveled proteins, inhibition of GSK-3 kinase, nuclear accumulation of beta-catenin and activation of Wnt target genes. A second signaling pathway involving PKC and calcium fluxes has been seen for some family members, but it is not yet clear if it represents a distinct pathway or if it can be integrated in the canonical pathway, as PKC seems to be required for Wnt-mediated inactivation of GSK-3 kinase. Both pathways seem to involve interactions with G-proteins. May be involved in transduction and intercellular transmission of polarity information during tissue morphogenesis and/or in differentiated tissues. Plays a role in controlling early axon growth and guidance processes necessary for the formation of a subset of central and peripheral major fiber tracts. Involved in the migration of cranial neural crest cells. May also be implicated in the transmission of sensory information from the trunk and limbs to the brain. Controls commissural sensory axons guidance after midline crossing along the anterior-posterior axis in the developing spinal cord in a Wnt-dependent signaling pathway. Together with FZD6, is involved in the neural tube closure and plays a role in the regulation of the establishment of planar cell polarity (PCP). Promotes neurogenesis by maintaining sympathetic neuroblasts within the cell cycle in a beta-catenin-dependent manner. The polypeptide is Frizzled-3 (FZD3) (Gallus gallus (Chicken)).